A 118-amino-acid polypeptide reads, in one-letter code: Small ribosomal subunit protein bS6 (118 aa).

It belongs to the bacterial ribosomal protein bS6 family.

Functionally, binds together with bS18 to 16S ribosomal RNA. In Parabacteroides distasonis (strain ATCC 8503 / DSM 20701 / CIP 104284 / JCM 5825 / NCTC 11152), this protein is Small ribosomal subunit protein bS6.